We begin with the raw amino-acid sequence, 620 residues long: Siderophore iron transporter ARN2 (620 aa).

Residues 1–42 (MIEVPEDNRSSQTKRKNTEKNCNELMVDEKMDDDSSPRDEMK) are disordered. A compositionally biased stretch (basic and acidic residues) spans 16–42 (KNTEKNCNELMVDEKMDDDSSPRDEMK). 14 consecutive transmembrane segments (helical) span residues 71-93 (IFLF…RGTY), 106-128 (LIST…FGGL), 135-152 (LTLF…TIIQ), 162-184 (AAGA…LMLS), 191-213 (WRLF…SGSV), 223-245 (WSWN…ILCM), 286-308 (VVGV…LAGG), 318-335 (IIGP…FIYW), 355-377 (VWAP…GYLY), 392-414 (TRII…LIVT), 421-438 (SYII…GLFY), 448-470 (GGII…PTIV), 491-513 (VFRI…SLYP), and 561-578 (VIVA…TFCV).

The protein belongs to the major facilitator superfamily.

The protein resides in the endosome membrane. In terms of biological role, involved in the transport of siderophore triacestylfusarinine C and so has a role in iron homeostasis. The sequence is that of Siderophore iron transporter ARN2 (ARN2) from Saccharomyces cerevisiae (strain ATCC 204508 / S288c) (Baker's yeast).